A 41-amino-acid chain; its full sequence is Pi-stichotoxin-Hcr5b (41 aa).

Cystine bridges form between Cys-4/Cys-37, Cys-6/Cys-30, and Cys-20/Cys-38.

The protein belongs to the sea anemone type 3 (BDS) potassium channel toxin family.

It localises to the secreted. The protein localises to the nematocyst. In terms of biological role, remarkably non-selective toxin, with activity on many different ion channels. Weakly and reversibly inhibits rat and human homomeric ASIC1 (isoform ASIC1a) (IC(50)=4.8 uM, and IC(50)=14.6 uM), and ASIC3 (IC(50)=15.9 uM). Molecular modeling interaction with ASIC1a suggests that this peptide hinders the collapse of acidic pockets and stabilizes nonconducting channels state. It activates several potassium channels including Kv1.1/KCNA1, Kv1.2/KCNA2, and drosophila Shaker IR. It moderately to potently inhibits potassium channels including Kv1.3/KCNA3, Kv1.4/KCNA4, Kv1.5/KCNA5, Kv1.6/KCNA6, Kv2.1/KCNB1, Kv4.2/KCND2, Kv7.1/KCNQ1, Kv7.2/Kv7.3 (KCNQ2/KCNQ3), Kv7.4/KCNQ4, hERG/KCNH2, and C.elegans QKT1. On sodium channels, it moderately to potently inhibits Nav1.1/SCN1A, Nav1.2/SCN2A, Nav1.3/SCN3A, Nav1.4/SCN4A, Nav1.5/SCN5A, Nav1.6/SCN8A, Nav1.7/SCN9A, Nav1.8/SCN10A, and B.germanica BgNav. It also moderately to potently inhibits Cav3.1/CACNA1G, Cav3.2/CACNA1H, and Cav3.3/CACNA1I. Significant shifts in the voltage-current relationship are observed on Kv and Nav, depending on the channel isoform, whereas the toxin does not seem to modulate the voltage-sensor domains of Cav channels, acting mainly as a pore blocker. Does not activate nicotinic acetylcholine receptors (nAChR), but potentiates ACh-elicited current of human alpha-7/CHRNA7 nAChR. Is also able to bind T.californica muscle-type nAChRs. In vivo, causes an excitatory effect in mice behavior. Also shows antihyperalgesic and analgesic activity in the acid-induced muscle pain mice model, and weak anti-inflammatory effect in models of acute local inflammation. This chain is Pi-stichotoxin-Hcr5b, found in Radianthus crispa (Leathery sea anemone).